The primary structure comprises 360 residues: Phospho-N-acetylmuramoyl-pentapeptide-transferase (360 aa).

Helical transmembrane passes span 26 to 46, 72 to 92, 94 to 114, 132 to 152, 168 to 188, 199 to 219, 236 to 256, 263 to 283, 288 to 308, and 338 to 358; these read AIVS…RMIA, PTMG…LWAY, SNPY…IGFV, WKYF…YLAG, VMPQ…VGTG, GLAI…AWAT, AGEL…FLWF, VFMG…IAVL, FLLV…ILQV, and VIVR…ATLK.

Belongs to the glycosyltransferase 4 family. MraY subfamily. Requires Mg(2+) as cofactor.

It localises to the cell inner membrane. The catalysed reaction is UDP-N-acetyl-alpha-D-muramoyl-L-alanyl-gamma-D-glutamyl-meso-2,6-diaminopimeloyl-D-alanyl-D-alanine + di-trans,octa-cis-undecaprenyl phosphate = di-trans,octa-cis-undecaprenyl diphospho-N-acetyl-alpha-D-muramoyl-L-alanyl-D-glutamyl-meso-2,6-diaminopimeloyl-D-alanyl-D-alanine + UMP. Its pathway is cell wall biogenesis; peptidoglycan biosynthesis. In terms of biological role, catalyzes the initial step of the lipid cycle reactions in the biosynthesis of the cell wall peptidoglycan: transfers peptidoglycan precursor phospho-MurNAc-pentapeptide from UDP-MurNAc-pentapeptide onto the lipid carrier undecaprenyl phosphate, yielding undecaprenyl-pyrophosphoryl-MurNAc-pentapeptide, known as lipid I. This is Phospho-N-acetylmuramoyl-pentapeptide-transferase from Klebsiella pneumoniae (strain 342).